A 118-amino-acid polypeptide reads, in one-letter code: Ribonuclease P protein component (118 aa).

The protein belongs to the RnpA family. Consists of a catalytic RNA component (M1 or rnpB) and a protein subunit.

The catalysed reaction is Endonucleolytic cleavage of RNA, removing 5'-extranucleotides from tRNA precursor.. Its function is as follows. RNaseP catalyzes the removal of the 5'-leader sequence from pre-tRNA to produce the mature 5'-terminus. It can also cleave other RNA substrates such as 4.5S RNA. The protein component plays an auxiliary but essential role in vivo by binding to the 5'-leader sequence and broadening the substrate specificity of the ribozyme. The protein is Ribonuclease P protein component of Shewanella sp. (strain ANA-3).